The primary structure comprises 321 residues: Corticotropin-releasing factor-binding protein (321 aa).

The signal sequence occupies residues 1-21 (MTPASRPDWCLILLFLAVLRG). 5 cysteine pairs are disulfide-bonded: Cys-59-Cys-80, Cys-103-Cys-140, Cys-182-Cys-204, Cys-237-Cys-264, and Cys-277-Cys-317. N-linked (GlcNAc...) asparagine glycosylation occurs at Asn-203.

This sequence belongs to the CRF-binding protein family.

It is found in the secreted. Binds CRF and inactivates it. May prevent inappropriate pituitary-adrenal stimulation in pregnancy. In Xenopus laevis (African clawed frog), this protein is Corticotropin-releasing factor-binding protein (crhbp).